Consider the following 291-residue polypeptide: Presqualene diphosphate synthase (291 aa).

The disordered stretch occupies residues 1–23 (MTSAMKKIQPEAFSEKSSDSQAS).

This sequence belongs to the phytoene/squalene synthase family. HpnD subfamily.

The catalysed reaction is 2 (2E,6E)-farnesyl diphosphate = presqualene diphosphate + diphosphate. The protein operates within secondary metabolite biosynthesis; hopanoid biosynthesis. Its function is as follows. Involved in the biosynthesis of the hopanoid precursor squalene (SQ) from farnesyl diphosphate (FPP). Catalyzes the first step, the formation of presqualene diphosphate (PSPP) from two molecules of FPP. In Zymomonas mobilis subsp. mobilis (strain ATCC 31821 / ZM4 / CP4), this protein is Presqualene diphosphate synthase.